A 502-amino-acid polypeptide reads, in one-letter code: Bone morphogenetic protein receptor type-1B (502 aa).

Residues 1-13 (MLLRSSGKLNVGT) form the signal peptide. The disordered stretch occupies residues 1 to 24 (MLLRSSGKLNVGTKKEDGESTAPT). Topologically, residues 14-126 (KKEDGESTAP…DFVDGPIHHK (113 aa)) are extracellular. 5 cysteine pairs are disulfide-bonded: C32–C53, C34–C38, C47–C71, C81–C95, and C96–C102. A helical membrane pass occupies residues 127 to 148 (ALLISVTVCSLLLVLIILFCYF). At 149-502 (RYKRQEARPR…KMSESQDIKL (354 aa)) the chain is on the cytoplasmic side. The 30-residue stretch at 174-203 (ESLRDLIEQSQSSGSGSGLPLLVQRTIAKQ) folds into the GS domain. One can recognise a Protein kinase domain in the interval 204–494 (IQMVKQIGKG…LRVKKTLAKM (291 aa)). Residues 210 to 218 (IGKGRYGEV) and K231 contribute to the ATP site. D332 functions as the Proton acceptor in the catalytic mechanism.

The protein belongs to the protein kinase superfamily. TKL Ser/Thr protein kinase family. TGFB receptor subfamily. As to quaternary structure, interacts with high affinity with GDF5; positively regulates chondrocyte differentiation. Interacts with SCUBE3. Interacts with TSC22D1/TSC-22. Interacts with TGFBR3. It depends on Mg(2+) as a cofactor. Requires Mn(2+) as cofactor. Post-translationally, autophosphorylated.

It localises to the cell membrane. The enzyme catalyses L-threonyl-[receptor-protein] + ATP = O-phospho-L-threonyl-[receptor-protein] + ADP + H(+). It carries out the reaction L-seryl-[receptor-protein] + ATP = O-phospho-L-seryl-[receptor-protein] + ADP + H(+). Its function is as follows. On ligand binding, forms a receptor complex consisting of two type II and two type I transmembrane serine/threonine kinases. Type II receptors phosphorylate and activate type I receptors which autophosphorylate, then bind and activate SMAD transcriptional regulators. Receptor for BMP7/OP-1. Receptor for GDF5. Positively regulates chondrocyte differentiation through GDF5 interaction. The protein is Bone morphogenetic protein receptor type-1B (Bmpr1b) of Mus musculus (Mouse).